Consider the following 425-residue polypeptide: Serine--tRNA ligase (425 aa).

231–233 (TAE) contacts L-serine. Residues 262-264 (RTE) and valine 278 contribute to the ATP site. Glutamate 285 lines the L-serine pocket. 349-352 (EVTS) contacts ATP. An L-serine-binding site is contributed by threonine 384.

The protein belongs to the class-II aminoacyl-tRNA synthetase family. Type-1 seryl-tRNA synthetase subfamily. As to quaternary structure, homodimer. The tRNA molecule binds across the dimer.

It is found in the cytoplasm. It catalyses the reaction tRNA(Ser) + L-serine + ATP = L-seryl-tRNA(Ser) + AMP + diphosphate + H(+). The catalysed reaction is tRNA(Sec) + L-serine + ATP = L-seryl-tRNA(Sec) + AMP + diphosphate + H(+). It functions in the pathway aminoacyl-tRNA biosynthesis; selenocysteinyl-tRNA(Sec) biosynthesis; L-seryl-tRNA(Sec) from L-serine and tRNA(Sec): step 1/1. Its function is as follows. Catalyzes the attachment of serine to tRNA(Ser). Is also able to aminoacylate tRNA(Sec) with serine, to form the misacylated tRNA L-seryl-tRNA(Sec), which will be further converted into selenocysteinyl-tRNA(Sec). This Dictyoglomus thermophilum (strain ATCC 35947 / DSM 3960 / H-6-12) protein is Serine--tRNA ligase.